Consider the following 101-residue polypeptide: Protein RnfH (101 aa).

Belongs to the UPF0125 (RnfH) family.

The protein is Protein RnfH of Pseudomonas aeruginosa (strain UCBPP-PA14).